A 472-amino-acid polypeptide reads, in one-letter code: Calcitonin gene-related peptide type 1 receptor (472 aa).

The N-terminal stretch at 1–28 is a signal peptide; it reads MGLLLRSALFKYIIIVLIMLNLRGYVLA. Residues 29 to 149 are Extracellular-facing; that stretch reads EQEQGSQIPL…FTHEKVKTAL (121 aa). Cystine bridges form between C58–C84, C75–C115, and C98–C137. N76, N128, and N133 each carry an N-linked (GlcNAc...) asparagine glycan. The chain crosses the membrane as a helical span at residues 150–174; that stretch reads NLYYLTIIGHGLSIASLLISLGIFF. The Cytoplasmic segment spans residues 175–185; that stretch reads YFKNLSCQRIT. Residues 186–208 traverse the membrane as a helical segment; that stretch reads LHKNLFFSFVCNSIITIISLSAV. At 209–219 the chain is on the extracellular side; it reads ANNQALVATNP. A helical transmembrane segment spans residues 220 to 248; the sequence is VSCKISQFIHLYLMGCNYFWMLCEGIYLH. Topologically, residues 249–262 are cytoplasmic; it reads TLIVVAVFAEKQHL. The helical transmembrane segment at 263-283 threads the bilayer; sequence MWYYLLGWGFPLIPACIHAVA. Topologically, residues 284-299 are extracellular; it reads RSLYYNDNCWISSETH. Residues 300-324 traverse the membrane as a helical segment; that stretch reads LLYIIHGPICAALLVNLFFLLNIVR. Topologically, residues 325-339 are cytoplasmic; that stretch reads VLITKLKVTHQAESN. Residues 340 to 361 traverse the membrane as a helical segment; that stretch reads LYMKAVRATLILVPLLGIEFVL. The Extracellular portion of the chain corresponds to 362–376; sequence FPWKPEGRIAEEIYD. Residues 377-397 traverse the membrane as a helical segment; the sequence is YVMHILMHYQGLLVATIFCFF. The Cytoplasmic segment spans residues 398 to 472; the sequence is NGEVQAVLKR…VFFKTEKQYM (75 aa).

Belongs to the G-protein coupled receptor 2 family.

The protein localises to the cell membrane. In terms of biological role, may function as G protein-coupled receptor for calcitonin-gene-related peptides and adrenomedullin. Specificity may be modulated by accessory proteins. May activate cAMP-dependent pathway. This is Calcitonin gene-related peptide type 1 receptor (calcrl) from Xenopus tropicalis (Western clawed frog).